A 563-amino-acid polypeptide reads, in one-letter code: uncharacterized protein (563 aa).

Positions 19 to 45 (CLICRRRKVKCDRQQPCSRCKERNEVC) form a DNA-binding region, zn(2)-C6 fungal-type. Residues 56-78 (NVGPHPSHSENASDSETTLEVSP) are disordered. Residues 64–75 (SENASDSETTLE) show a composition bias toward polar residues.

It localises to the nucleus. This is an uncharacterized protein from Schizosaccharomyces pombe (strain 972 / ATCC 24843) (Fission yeast).